The following is a 435-amino-acid chain: RuBisCO large subunit-binding protein subunit beta-1 (435 aa).

Belongs to the chaperonin (HSP60) family. In terms of assembly, oligomer of probably six alpha and six beta subunits.

The protein localises to the plastid. The protein resides in the chloroplast. This protein binds RuBisCO small and large subunits and is implicated in the assembly of the enzyme oligomer. The protein is RuBisCO large subunit-binding protein subunit beta-1 of Chlamydomonas reinhardtii (Chlamydomonas smithii).